The chain runs to 383 residues: MGRITTDLLRRRAEHNEGCLSNLKEVALHQQDIERIELIGDACRELEILYLCNNYISRIEGLQHLKYLKYLNLAVNNITYIEGLEGCEALERLDLTLNFVADVTCVERLRANAFLDQLHLTGNPCTKVAGYRAYVVHALPQLRELDGEEVIKTERLEARQSKDDISVAVNEEALRLQKRSVSSQRWLHEALTAFPPRYNEKGERLYGHTPEERLQMLREKEEEERRKREEQRERERSSQFGAIREELERKPQRLTAEEEIAKHGRLLLRNEPKLPFTLDEEADDGEAVVLTVKVPRFLSTTLIDVQVEVNYIRVFVKEKLIQVPLSQEVAPSGVNVQRSSVNGELRIRIPYAPHVLQEVSEARRRRQRLLGLLSDDKNEDGTG.

4 LRR repeats span residues 20 to 45, 46 to 66, 67 to 89, and 90 to 110; these read LSNLKEVALHQQDIERIELIGDACRE, LEILYLCNNYISRIEGLQHLK, YLKYLNLAVNNITYIEGLEGCEA, and LERLDLTLNFVADVTCVERLR. An LRRCT domain is found at 128-146; sequence VAGYRAYVVHALPQLRELD. A disordered region spans residues 201-244; that stretch reads KGERLYGHTPEERLQMLREKEEEERRKREEQRERERSSQFGAIR. A coiled-coil region spans residues 211–239; sequence EERLQMLREKEEEERRKREEQRERERSSQ.

The protein belongs to the tilB family.

Its subcellular location is the cytoplasm. The protein localises to the cytoskeleton. It is found in the flagellum basal body. In terms of biological role, involved in the regulation of the cell cycle; is required for the basal body replication and new flagellum biogenesis. The polypeptide is Dynein axonemal assembly factor 11 (dnaaf11) (Trypanosoma brucei brucei).